A 946-amino-acid polypeptide reads, in one-letter code: Nonribosomal peptide synthetase pngA (946 aa).

Positions 32–450 are adenylation (A) domain; the sequence is AIASREPTRY…AGREKDSIIV (419 aa). Residues 580-659 enclose the Carrier domain; that stretch reads QPRSGLEQSL…TLSDALKQHA (80 aa). Ser-618 bears the O-(pantetheine 4'-phosphoryl)serine mark. Residues 681–933 are thioesterase (TE) domain; it reads PIWLVHPVGG…ILDAENIFSF (253 aa).

The protein belongs to the NRP synthetase family.

The enzyme catalyses 2 3-phenylpyruvate + H(+) = phenguignardate + H2O. Nonribosomal peptide synthetase that mediates the biosynthesis of phenguignardic acid. PngA alone is sufficient for phenguignardic acid synthesis. PngA first activates phenylpyruvic acid (PPA) through its A domain to AMP-PPA. The PPA unit is then loaded to the T domain and eventually transferred to the TE domain. Another PPA unit is then loaded onto the T domain. The TE domain likely promotes the enolate formation on the attached unit, followed by a nucleophilic attack on the carbonyl to yield an ether linkage between the two units. Finally, the TE domain probably catalyzes a similar reaction to give the cyclized dioxolanone core and releases phenguignardic acid. The sequence is that of Nonribosomal peptide synthetase pngA from Aspergillus terreus (strain NIH 2624 / FGSC A1156).